We begin with the raw amino-acid sequence, 627 residues long: DNA mismatch repair protein MutL (627 aa).

The span at 354–364 shows a compositional bias: basic and acidic residues; sequence DEKPPEKKVPE. The interval 354-374 is disordered; the sequence is DEKPPEKKVPEKSTAPSYSPM.

The protein belongs to the DNA mismatch repair MutL/HexB family.

Functionally, this protein is involved in the repair of mismatches in DNA. It is required for dam-dependent methyl-directed DNA mismatch repair. May act as a 'molecular matchmaker', a protein that promotes the formation of a stable complex between two or more DNA-binding proteins in an ATP-dependent manner without itself being part of a final effector complex. Overexpression of mutSL partially suppresses the high spontaneous mutation frequency of a ytkD/mutM/mutY triple disruption which lacks the system required to prevent damage by oxidized guanine (8-oxo-dGTP). This suggests that MutSL also functions to repair mismatches due to oxidative stress in both growing and stationary phase cells. The sequence is that of DNA mismatch repair protein MutL from Bacillus subtilis (strain 168).